The sequence spans 503 residues: ATP synthase subunit alpha, chloroplastic (503 aa).

Residue 170 to 177 coordinates ATP; the sequence is GDRQTGKT.

The protein belongs to the ATPase alpha/beta chains family. F-type ATPases have 2 components, CF(1) - the catalytic core - and CF(0) - the membrane proton channel. CF(1) has five subunits: alpha(3), beta(3), gamma(1), delta(1), epsilon(1). CF(0) has four main subunits: a, b, b' and c.

It is found in the plastid. Its subcellular location is the chloroplast thylakoid membrane. It carries out the reaction ATP + H2O + 4 H(+)(in) = ADP + phosphate + 5 H(+)(out). In terms of biological role, produces ATP from ADP in the presence of a proton gradient across the membrane. The alpha chain is a regulatory subunit. In Gracilaria tenuistipitata var. liui (Red alga), this protein is ATP synthase subunit alpha, chloroplastic.